The following is a 567-amino-acid chain: DNA ligase B (567 aa).

The active-site N6-AMP-lysine intermediate is the Lys-132.

It belongs to the NAD-dependent DNA ligase family. LigB subfamily.

The enzyme catalyses NAD(+) + (deoxyribonucleotide)n-3'-hydroxyl + 5'-phospho-(deoxyribonucleotide)m = (deoxyribonucleotide)n+m + AMP + beta-nicotinamide D-nucleotide.. Functionally, catalyzes the formation of phosphodiester linkages between 5'-phosphoryl and 3'-hydroxyl groups in double-stranded DNA using NAD as a coenzyme and as the energy source for the reaction. The protein is DNA ligase B of Yersinia pseudotuberculosis serotype IB (strain PB1/+).